The sequence spans 357 residues: Prostaglandin E2 receptor EP2 subtype (357 aa).

At 1–24 the chain is on the extracellular side; sequence MDNSFNDSRRVENCESRQYLLSDE. N-linked (GlcNAc...) asparagine glycosylation is present at N6. Residues 25 to 48 traverse the membrane as a helical segment; it reads SPAISSVMFTAGVLGNLIALALLA. At 49-66 the chain is on the cytoplasmic side; it reads RRWRGDTGCSAGSRTSIS. Residues 67-92 form a helical membrane-spanning segment; it reads LFHVLVTELVLTDLLGTCLISPVVLA. At 93 to 112 the chain is on the extracellular side; it reads SYSRNQTLVALAPESRACTY. C110 and C188 are joined by a disulfide. Residues 113 to 133 traverse the membrane as a helical segment; it reads FAFTMTFFSLATMLMLFAMAL. Residues 134 to 152 are Cytoplasmic-facing; the sequence is ERYLAIGHPYFYRRRVSRR. A helical membrane pass occupies residues 153-177; that stretch reads GGLAVLPAIYGVSLLFCSLPLLNYG. Residues 178-199 are Extracellular-facing; the sequence is EYVQYCPGTWCFIQHGRTAYLQ. Residues 200-224 form a helical membrane-spanning segment; sequence LYATVLLLLIVAVLGCNISVILNLI. Residues 225 to 262 lie on the Cytoplasmic side of the membrane; that stretch reads RMQLRSKRSRCGLSGSSLRGPGSRRRGERTSMAEETDH. Residues 235 to 245 show a composition bias toward low complexity; sequence CGLSGSSLRGP. A disordered region spans residues 235–255; sequence CGLSGSSLRGPGSRRRGERTS. A helical transmembrane segment spans residues 263 to 286; sequence LILLAIMTITFAVCSLPFTIFAYM. At 287-299 the chain is on the extracellular side; the sequence is DETSSRKEKWDLR. Residues 300 to 323 form a helical membrane-spanning segment; the sequence is ALRFLSVNSIIDPWVFVILRPPVL. The Cytoplasmic portion of the chain corresponds to 324–357; sequence RLMRSVLCCRTSLRAPEAPGASCSTQQTDLCGQL.

This sequence belongs to the G-protein coupled receptor 1 family.

The protein localises to the cell membrane. Functionally, receptor for prostaglandin E2 (PGE2). The activity of this receptor is mediated by G(s) proteins that stimulate adenylate cyclase. The subsequent raise in intracellular cAMP is responsible for the relaxing effect of this receptor on smooth muscle. The sequence is that of Prostaglandin E2 receptor EP2 subtype (Ptger2) from Rattus norvegicus (Rat).